The sequence spans 549 residues: Glucose-6-phosphate isomerase (549 aa).

Catalysis depends on Glu355, which acts as the Proton donor. Catalysis depends on residues His386 and Lys514.

The protein belongs to the GPI family.

The protein localises to the cytoplasm. It catalyses the reaction alpha-D-glucose 6-phosphate = beta-D-fructose 6-phosphate. Its pathway is carbohydrate biosynthesis; gluconeogenesis. It participates in carbohydrate degradation; glycolysis; D-glyceraldehyde 3-phosphate and glycerone phosphate from D-glucose: step 2/4. Functionally, catalyzes the reversible isomerization of glucose-6-phosphate to fructose-6-phosphate. The chain is Glucose-6-phosphate isomerase from Buchnera aphidicola subsp. Acyrthosiphon pisum (strain APS) (Acyrthosiphon pisum symbiotic bacterium).